Here is a 571-residue protein sequence, read N- to C-terminus: Cytochrome P450 monooxygenase g430 (571 aa).

A helical transmembrane segment spans residues 8–28; sequence GALIWVVTSYILYAIISNFII. Residue C471 coordinates heme. A disordered region spans residues 552-571; sequence CPLPAEAKLPKSRKPIGTAS.

It belongs to the cytochrome P450 family. The cofactor is heme.

The protein resides in the membrane. It participates in mycotoxin biosynthesis. In terms of biological role, cytochrome P450 monooxygenase; part of the gene cluster that mediates the biosynthesis of 1233A, a natural compound known as an inhibitor of HMG-CoA synthase in the mevalonate pathway and with antibacterial and antifungal activities. The highly reducing polyketide synthase g433 is responsible for the 1233A backbone biosynthesis and the cytochrome P450 monooxygenase g430 catalyzes oxidation of the backbone. The sequence is that of Cytochrome P450 monooxygenase g430 from Fusarium sp.